A 303-amino-acid polypeptide reads, in one-letter code: Endo-1,3;1,4-beta-D-glucanase (303 aa).

Residues 1 to 43 form the signal peptide; it reads MPSSAQVLLCLAAVLAAAAATTAEAHSQCLDNPPDRSIHGRQL. N-linked (GlcNAc...) asparagine glycans are attached at residues asparagine 115, asparagine 197, and asparagine 257.

Post-translationally, glycosylated.

It is found in the secreted. Plays a role in control of plant growth. Mediates specific degradation of cell wall (1,3)(1,4)-beta-D-glucans and is related to auxin-mediated growth and development of cereal coleoptiles. This Zea mays (Maize) protein is Endo-1,3;1,4-beta-D-glucanase.